The following is a 129-amino-acid chain: MLMKQVSAFLLVGIGGFLGSAARYGASLLLSPVAGGLPLATFSVNIIGCFFIGFISELALSTTLVSPESRLFLVTGFCGGFTTFSSYIFENASLLKDGQMLYTSAYLAGSVIGGFVALYSGTFFAKIWT.

The next 4 membrane-spanning stretches (helical) occupy residues 1 to 21 (MLMK…LGSA), 35 to 55 (GGLP…IGFI), 71 to 91 (LFLV…IFEN), and 105 to 125 (AYLA…TFFA). Positions 79 and 82 each coordinate Na(+).

It belongs to the fluoride channel Fluc/FEX (TC 1.A.43) family.

Its subcellular location is the cell inner membrane. The catalysed reaction is fluoride(in) = fluoride(out). Its activity is regulated as follows. Na(+) is not transported, but it plays an essential structural role and its presence is essential for fluoride channel function. Fluoride-specific ion channel. Important for reducing fluoride concentration in the cell, thus reducing its toxicity. In Chlorobium phaeobacteroides (strain DSM 266 / SMG 266 / 2430), this protein is Fluoride-specific ion channel FluC.